The primary structure comprises 207 residues: Small ribosomal subunit protein uS4 (207 aa).

Residues 31 to 52 (KAKFDSKPGQHGRTSGARTSDY) form a disordered region. Positions 97–157 (CRLDNVVYRM…DKSKKQARIV (61 aa)) constitute an S4 RNA-binding domain.

This sequence belongs to the universal ribosomal protein uS4 family. Part of the 30S ribosomal subunit. Contacts protein S5. The interaction surface between S4 and S5 is involved in control of translational fidelity.

One of the primary rRNA binding proteins, it binds directly to 16S rRNA where it nucleates assembly of the body of the 30S subunit. Functionally, with S5 and S12 plays an important role in translational accuracy. This Acidovorax sp. (strain JS42) protein is Small ribosomal subunit protein uS4.